The sequence spans 131 residues: Leptin receptor gene-related protein (131 aa).

The next 4 helical transmembrane spans lie at 7–27, 32–52, 69–89, and 100–120; these read LVALSFSGAIGLTFLMLGCAL, VYWPLFVLIFHAISPIPHFIA, LAYFFTTGIVVSAFGFPVILA, and GLVLAGNAVIFLTIQGFFLVF.

The protein belongs to the OB-RGRP/VPS55 family. As to quaternary structure, interacts with LEPR. Interacts with RAB13.

Its subcellular location is the golgi apparatus membrane. It localises to the endosome membrane. Functionally, negatively regulates leptin receptor (LEPR) cell surface expression, and thus decreases response to leptin/LEP. Negatively regulates growth hormone (GH) receptor cell surface expression in liver. May play a role in liver resistance to GH during periods of reduced nutrient availability. The sequence is that of Leptin receptor gene-related protein (LEPROT) from Bos taurus (Bovine).